Reading from the N-terminus, the 427-residue chain is MSFEKSIKAMEQAEKLMPGGVNSPVRAFKSVDTPAIFMDHGEGSKIYDIDGNEYIDYVLSWGPLILGHKNQQVISKLHEAVDKGTSFGASTLQENKLAELVIDRVPSIEKVRMVSSGTEATLDTLRLARGYTGRNKIIKFEGCYHGHSDSLLIKAGSGVATLGLPDSPGVPEGIAKNTITVPYNDLDSLKLAFEKYGDDIAGVIVEPVAGNMGVVPPVNGFLQGLRDITNEYGALLIFDEVMTGFRVGYNCAQGYFGVTPDLTCLGKVIGGGLPVGAFGGKKEIMDYIAPVGTIYQAGTLSGNPLAMTSGYETLSQLTPESYEYFNSLGDILEKGLKEVFAKHNVPITVNRAGSMIGYFLNEGPVTNFEEANKSDLKLFSNMYREMAKEGVFLPPSQFEGTFLSTAHTKDDIEKTIQAFDNALSRIV.

Lys-267 carries the post-translational modification N6-(pyridoxal phosphate)lysine.

The protein belongs to the class-III pyridoxal-phosphate-dependent aminotransferase family. HemL subfamily. Homodimer. The cofactor is pyridoxal 5'-phosphate.

It localises to the cytoplasm. The catalysed reaction is (S)-4-amino-5-oxopentanoate = 5-aminolevulinate. It functions in the pathway porphyrin-containing compound metabolism; protoporphyrin-IX biosynthesis; 5-aminolevulinate from L-glutamyl-tRNA(Glu): step 2/2. The polypeptide is Glutamate-1-semialdehyde 2,1-aminomutase 1 (Staphylococcus epidermidis (strain ATCC 35984 / DSM 28319 / BCRC 17069 / CCUG 31568 / BM 3577 / RP62A)).